The chain runs to 129 residues: uncharacterized protein (129 aa).

Residues 1 to 28 (MAGTLFIILRFVDTTLPSSRVYCVRSLE) lie on the Cytoplasmic side of the membrane. A helical membrane pass occupies residues 29 to 49 (VSVAVELAAATVLAFESIGVV). Residues 50 to 54 (DDCGR) are Extracellular-facing. A helical membrane pass occupies residues 55–75 (SVLFSIILIAAFICSVFLIAS). Over 76–129 (EDIAGSRRSTGSCVTLWEGRNISFCLYRSNWLNTVPVGYMFFLRKNRSLDERYF) the chain is Cytoplasmic.

It is found in the membrane. This is an uncharacterized protein from Saccharomyces cerevisiae (strain ATCC 204508 / S288c) (Baker's yeast).